The following is a 350-amino-acid chain: Zinc finger protein 367 (350 aa).

Residues 104-151 (SGLRGRGAPPPAASASAAASGGEDEEEASSPDSGHLKDGIRRGRPRAD) form a disordered region. Positions 137 to 151 (GHLKDGIRRGRPRAD) are enriched in basic and acidic residues. 2 C2H2-type zinc fingers span residues 167-189 (IRCNICNRVFPREKSLQAHKRTH) and 195-219 (YLCDYPDCGKAFVQSGQLKTHQRLH). Positions 290–327 (KGKLVQKADQEQQDPLEYLQSDEEDDEKRGAQRRLQEQ) are disordered. The stretch at 308–342 (LQSDEEDDEKRGAQRRLQEQRERLHGALALIELAN) forms a coiled coil. Position 310 is a phosphoserine (serine 310). The span at 316 to 327 (EKRGAQRRLQEQ) shows a compositional bias: basic and acidic residues.

The protein belongs to the krueppel C2H2-type zinc-finger protein family.

It localises to the nucleus. Functionally, transcriptional activator. Isoform 1 may be involved in transcriptional activation of erythroid genes. This Homo sapiens (Human) protein is Zinc finger protein 367 (ZNF367).